A 664-amino-acid chain; its full sequence is DNA primase (664 aa).

A CHC2-type zinc finger spans residues 40-64 (CPFHKEKTPSFTVSPDKQFYYCFGC). Residues 94 to 104 (GMDVPREERGG) are compositionally biased toward basic and acidic residues. A disordered region spans residues 94–115 (GMDVPREERGGRGHTPRQPTDS). The 83-residue stretch at 262–344 (DEIMVVEGYM…GKRVRFLFLP (83 aa)) folds into the Toprim domain. Positions 268, 312, and 314 each coordinate Mg(2+). The segment at 483–521 (PRKSWNKDKKPWDGKKWDGKKKWDKGGRGDFKAPQRTPV) is disordered. Residues 487–515 (WNKDKKPWDGKKWDGKKKWDKGGRGDFKA) are compositionally biased toward basic and acidic residues.

Belongs to the DnaG primase family. In terms of assembly, monomer. Interacts with DnaB. Requires Zn(2+) as cofactor. Mg(2+) serves as cofactor.

The catalysed reaction is ssDNA + n NTP = ssDNA/pppN(pN)n-1 hybrid + (n-1) diphosphate.. Its function is as follows. RNA polymerase that catalyzes the synthesis of short RNA molecules used as primers for DNA polymerase during DNA replication. This is DNA primase from Pseudomonas aeruginosa (strain ATCC 15692 / DSM 22644 / CIP 104116 / JCM 14847 / LMG 12228 / 1C / PRS 101 / PAO1).